We begin with the raw amino-acid sequence, 412 residues long: uncharacterized protein (412 aa).

7 tandem repeats follow at residues 112 to 116 (GSIRS), 117 to 121 (GSIRS), 122 to 126 (GSIRD), 127 to 131 (GSIRD), 132 to 136 (GSIRS), 137 to 141 (GNIRD), and 142 to 146 (GSVRS). A 7 X 5 AA tandem repeats of G-[NS]-[IV]-R-[DS] region spans residues 112–146 (GSIRSGSIRSGSIRDGSIRDGSIRSGNIRDGSVRS). Low complexity predominate over residues 116–126 (SGSIRSGSIRD). The tract at residues 116–209 (SGSIRSGSIR…SEKSIKPSTK (94 aa)) is disordered. The span at 192-209 (NHYAESEYSEKSIKPSTK) shows a compositional bias: basic and acidic residues.

The protein belongs to the asfivirus B407L family.

This is an uncharacterized protein from Ornithodoros (relapsing fever ticks).